Reading from the N-terminus, the 310-residue chain is Aspartate carbamoyltransferase catalytic subunit (310 aa).

The carbamoyl phosphate site is built by Arg58 and Thr59. Residue Lys87 coordinates L-aspartate. Positions 108, 136, and 139 each coordinate carbamoyl phosphate. Residues Arg169 and Arg229 each contribute to the L-aspartate site. Residues Leu268 and Pro269 each coordinate carbamoyl phosphate.

The protein belongs to the aspartate/ornithine carbamoyltransferase superfamily. ATCase family. In terms of assembly, heterododecamer (2C3:3R2) of six catalytic PyrB chains organized as two trimers (C3), and six regulatory PyrI chains organized as three dimers (R2).

The catalysed reaction is carbamoyl phosphate + L-aspartate = N-carbamoyl-L-aspartate + phosphate + H(+). The protein operates within pyrimidine metabolism; UMP biosynthesis via de novo pathway; (S)-dihydroorotate from bicarbonate: step 2/3. Its function is as follows. Catalyzes the condensation of carbamoyl phosphate and aspartate to form carbamoyl aspartate and inorganic phosphate, the committed step in the de novo pyrimidine nucleotide biosynthesis pathway. The sequence is that of Aspartate carbamoyltransferase catalytic subunit from Leptospira biflexa serovar Patoc (strain Patoc 1 / Ames).